The sequence spans 510 residues: Inositol-3-phosphate synthase (510 aa).

Gly-70, Gly-71, Asn-72, Asn-73, Asp-143, Ile-180, Gln-190, Arg-193, Thr-230, Ala-231, Asn-232, Thr-233, Gly-281, Ser-282, Asp-306, Ser-309, Asn-340, Asn-341, Asp-342, Lys-355, Gly-393, Asp-394, Asp-422, and Ser-423 together coordinate NAD(+).

The protein belongs to the myo-inositol 1-phosphate synthase family. The cofactor is NAD(+).

The protein localises to the cytoplasm. Its subcellular location is the cytosol. It is found in the nucleus. The catalysed reaction is D-glucose 6-phosphate = 1D-myo-inositol 3-phosphate. It participates in polyol metabolism; myo-inositol biosynthesis; myo-inositol from D-glucose 6-phosphate: step 1/2. Key enzyme in myo-inositol biosynthesis pathway that catalyzes the conversion of glucose 6-phosphate to 1-myo-inositol 1-phosphate in a NAD-dependent manner. The polypeptide is Inositol-3-phosphate synthase (INPS1) (Nicotiana paniculata).